A 162-amino-acid polypeptide reads, in one-letter code: Large ribosomal subunit protein uL10 (162 aa).

It belongs to the universal ribosomal protein uL10 family. Part of the ribosomal stalk of the 50S ribosomal subunit. The N-terminus interacts with L11 and the large rRNA to form the base of the stalk. The C-terminus forms an elongated spine to which L12 dimers bind in a sequential fashion forming a multimeric L10(L12)X complex.

Its function is as follows. Forms part of the ribosomal stalk, playing a central role in the interaction of the ribosome with GTP-bound translation factors. The protein is Large ribosomal subunit protein uL10 of Aliarcobacter butzleri (strain RM4018) (Arcobacter butzleri).